Here is a 368-residue protein sequence, read N- to C-terminus: C2H2 type master regulator of conidiophore development BrlA (368 aa).

Residues 268–292 (CKCDYPGCHKAFRRNEHLKRHKQTF) form a C2H2-type 1; degenerate zinc finger. Residues 300–323 (FSCEFCGKDQFNRQDNLNNHRKLH) form a C2H2-type 2 zinc finger. The disordered stretch occupies residues 338–368 (AAVPIIEQEERSRKRRAPPKSKSADKRVDDY). Basic and acidic residues predominate over residues 359-368 (KSADKRVDDY).

It localises to the nucleus. BrlA, abaA and wetA are pivotal regulators of conidiophore development and conidium maturation. They act individually and together to regulate their own expression and that of numerous other sporulation-specific genes. BrlA, abaA and wetA act together to positively regulate the expression of the Pks1 gene cluster that mediates the biosynthesis of an anthraquinone derivative pigment that contributes to conidial pigmentation that provides protection from UV radiation, heat and cold stress. The polypeptide is C2H2 type master regulator of conidiophore development BrlA (Metarhizium robertsii (strain ARSEF 23 / ATCC MYA-3075) (Metarhizium anisopliae (strain ARSEF 23))).